Reading from the N-terminus, the 346-residue chain is E3 ubiquitin-protein ligase RNF146-A (346 aa).

The RING-type zinc finger occupies 37–75 (CAICLQTCVHPVSLPCKHVFCYLCVKGASWLGKRCALCR). The 77-residue stretch at 91–167 (PELKAASRGN…EHGRRRKIKR (77 aa)) folds into the WWE domain. Disordered stretches follow at residues 195 to 240 (SSAD…GTSL) and 256 to 301 (ERSH…ALVA). A compositionally biased stretch (low complexity) spans 202–216 (SVPAQSGASVQSSSV). Acidic residues predominate over residues 281 to 295 (SIEETESDASSDSED).

In terms of assembly, interacts with poly-ADP-ribosylated AXIN1, AXIN2, BLZF1 and CASC3. In terms of processing, ubiquitinated; autoubiquitinated. Autoubiquitination is enhanced upon poly(ADP-ribose)-binding.

Its subcellular location is the cytoplasm. It localises to the cytosol. The catalysed reaction is S-ubiquitinyl-[E2 ubiquitin-conjugating enzyme]-L-cysteine + [acceptor protein]-L-lysine = [E2 ubiquitin-conjugating enzyme]-L-cysteine + N(6)-ubiquitinyl-[acceptor protein]-L-lysine.. Its pathway is protein modification; protein ubiquitination. In terms of biological role, E3 ubiquitin-protein ligase that specifically binds poly-ADP-ribosylated proteins and mediates their ubiquitination and subsequent degradation. Acts as an activator of the Wnt signaling pathway by mediating the ubiquitination of poly-ADP-ribosylated AXIN1 and AXIN2, 2 key components of the beta-catenin destruction complex. Acts in cooperation with tankyrase proteins (TNKS and TNKS2), which mediate poly-ADP-ribosylation of target proteins AXIN1, AXIN2, BLZF1, CASC3, TNKS and TNKS2. Recognizes and binds tankyrase-dependent poly-ADP-ribosylated proteins via its WWE domain and mediates their ubiquitination. This is E3 ubiquitin-protein ligase RNF146-A (RNF146A) from Bos taurus (Bovine).